The following is a 452-amino-acid chain: MPYIPHTPDDVRAMLDAIGADSIEDLFDEIPSHLKAAGKLDALPEGLSEMDVTRLMSDRAAQDAGAVSFIGAGAYQHHVPAAVWEIATRGEFYTAYTPYQAEASQGTLQVIYEFQTLMTRLTGMDVSNASVYDGASGLAEAVLMSLRANRKSKSRKVLVPTAVNPRYTSATQAIVENQDVALERVGFDAASGQTPLDALKPYEGEDYAALVISQPNFFGSLEEVDALTDWAHANKMLVIGVVNPTSLALLTPPGEWGADGADIVVGEGQPLGVPLSSGGPYFGFMCCKQKHVRQMPGRIIGRTVDMEGKQGFTLTLQAREQHIRRSKATSNICTNQGLAMTAATIYTSLLGPDGLGNVAAHCHANTQALADKLTAIDGVERAFTAPTFHEVVLTLPKPADQVLAALAEKDVLGGVSLAGDYDMNNAILVNATEVHSEQDLQLFEQALKEVLA.

The protein belongs to the GcvP family. N-terminal subunit subfamily. As to quaternary structure, the glycine cleavage system is composed of four proteins: P, T, L and H. In this organism, the P 'protein' is a heterodimer of two subunits.

The catalysed reaction is N(6)-[(R)-lipoyl]-L-lysyl-[glycine-cleavage complex H protein] + glycine + H(+) = N(6)-[(R)-S(8)-aminomethyldihydrolipoyl]-L-lysyl-[glycine-cleavage complex H protein] + CO2. In terms of biological role, the glycine cleavage system catalyzes the degradation of glycine. The P protein binds the alpha-amino group of glycine through its pyridoxal phosphate cofactor; CO(2) is released and the remaining methylamine moiety is then transferred to the lipoamide cofactor of the H protein. The chain is Probable glycine dehydrogenase (decarboxylating) subunit 1 from Alcanivorax borkumensis (strain ATCC 700651 / DSM 11573 / NCIMB 13689 / SK2).